We begin with the raw amino-acid sequence, 148 residues long: Small ribosomal subunit protein uS7m (148 aa).

Belongs to the universal ribosomal protein uS7 family. Part of the small ribosomal subunit.

The protein localises to the mitochondrion. One of the primary rRNA binding proteins, it binds directly to 18S rRNA where it nucleates assembly of the head domain of the small subunit. This is Small ribosomal subunit protein uS7m (RPS7) from Triticum aestivum (Wheat).